Here is a 252-residue protein sequence, read N- to C-terminus: uncharacterized protein (252 aa).

Positions 106 to 140 form a coiled coil; that stretch reads IQSLHARRDHLDNAVEQLKSQLSRLDSSVAILKSQ.

This is an uncharacterized protein from Caenorhabditis elegans.